The sequence spans 731 residues: Elongation factor 2 (731 aa).

The region spanning 19–234 (EYIRNIGICA…DIIDYCNEGK (216 aa)) is the tr-type G domain. GTP is bound by residues 28-35 (AHIDHGKT), 94-98 (DTPGH), and 148-151 (NKVD). Diphthamide is present on H598.

This sequence belongs to the TRAFAC class translation factor GTPase superfamily. Classic translation factor GTPase family. EF-G/EF-2 subfamily.

It localises to the cytoplasm. Functionally, catalyzes the GTP-dependent ribosomal translocation step during translation elongation. During this step, the ribosome changes from the pre-translocational (PRE) to the post-translocational (POST) state as the newly formed A-site-bound peptidyl-tRNA and P-site-bound deacylated tRNA move to the P and E sites, respectively. Catalyzes the coordinated movement of the two tRNA molecules, the mRNA and conformational changes in the ribosome. This Methanobrevibacter ruminantium (strain ATCC 35063 / DSM 1093 / JCM 13430 / OCM 146 / M1) (Methanobacterium ruminantium) protein is Elongation factor 2.